Reading from the N-terminus, the 209-residue chain is MGKLYVFDHPLIQHKITYIRDKNTGTKDFRELVDEVASLMAFEITRDLPLEDIEIETPVSKATTKVIAGKKLGLIPILRAGLGMVDGILKLIPAAKVGHVGLYRDPKTLQPVEYYVKLPTDVEERDFIVLDPMLATGGSAAEAINSLKKRGAKQIKLMCIVAAPEGVKVVQEEHPDVDIYVAALDEKLNDHGYVVPGLGDAGDRLFGTK.

5-phospho-alpha-D-ribose 1-diphosphate is bound by residues R79, R104, and 131–139; that span reads DPMLATGGS. Residues V194 and 199–201 contribute to the uracil site; that span reads GDA. D200 provides a ligand contact to 5-phospho-alpha-D-ribose 1-diphosphate.

The protein belongs to the UPRTase family. Mg(2+) serves as cofactor.

The enzyme catalyses UMP + diphosphate = 5-phospho-alpha-D-ribose 1-diphosphate + uracil. The protein operates within pyrimidine metabolism; UMP biosynthesis via salvage pathway; UMP from uracil: step 1/1. With respect to regulation, allosterically activated by GTP. Functionally, catalyzes the conversion of uracil and 5-phospho-alpha-D-ribose 1-diphosphate (PRPP) to UMP and diphosphate. The polypeptide is Uracil phosphoribosyltransferase (Bacillus mycoides (strain KBAB4) (Bacillus weihenstephanensis)).